The primary structure comprises 1255 residues: DNA-directed RNA polymerase subunit beta' (1255 aa).

Residues Cys-60, Cys-62, Cys-77, and Cys-80 each contribute to the Zn(2+) site. Mg(2+) contacts are provided by Asp-503, Asp-505, and Asp-507. Zn(2+) is bound by residues Cys-875, Cys-950, Cys-957, and Cys-960.

This sequence belongs to the RNA polymerase beta' chain family. As to quaternary structure, the RNAP catalytic core consists of 2 alpha, 1 beta, 1 beta' and 1 omega subunit. When a sigma factor is associated with the core the holoenzyme is formed, which can initiate transcription. The cofactor is Mg(2+). Requires Zn(2+) as cofactor.

The catalysed reaction is RNA(n) + a ribonucleoside 5'-triphosphate = RNA(n+1) + diphosphate. Its function is as follows. DNA-dependent RNA polymerase catalyzes the transcription of DNA into RNA using the four ribonucleoside triphosphates as substrates. This chain is DNA-directed RNA polymerase subunit beta', found in Mycoplasma mycoides subsp. mycoides SC (strain CCUG 32753 / NCTC 10114 / PG1).